Here is a 230-residue protein sequence, read N- to C-terminus: Fibrillarin-like rRNA/tRNA 2'-O-methyltransferase (230 aa).

S-adenosyl-L-methionine-binding positions include 87–88, 105–106, 130–131, and 150–153; these read TT, EF, DA, and DVAQ.

This sequence belongs to the methyltransferase superfamily. Fibrillarin family. In terms of assembly, interacts with nop5. Component of box C/D small ribonucleoprotein (sRNP) particles that contain rpl7ae, FlpA and nop5, plus a guide RNA.

In terms of biological role, involved in pre-rRNA and tRNA processing. Utilizes the methyl donor S-adenosyl-L-methionine to catalyze the site-specific 2'-hydroxyl methylation of ribose moieties in rRNA and tRNA. Site specificity is provided by a guide RNA that base pairs with the substrate. Methylation occurs at a characteristic distance from the sequence involved in base pairing with the guide RNA. The sequence is that of Fibrillarin-like rRNA/tRNA 2'-O-methyltransferase from Methanococcus maripaludis (strain DSM 14266 / JCM 13030 / NBRC 101832 / S2 / LL).